A 649-amino-acid polypeptide reads, in one-letter code: MTDKQVYPVSPEVAERALVNKSQYEEMYRQSVEDPNTFWGEHGKRIDWIKPFTKVKNSTYDYNNLSIKWFEDGVLNASANCLDRHLEQRGDQTAIIFEGDDPSVSRNVTYRELYEETCKFANVLKDQGVKKGDVVTIYMPMIVETAVAMLACARIGAIHSVVFGGFSPEALAARIVNGKSRFVITADEGLRGGRAIPLKKNVDSALKHEDDAKVDKVIVVSRTGNDQVPWTEGRDLRYEDLMKNASAECQPEPMNAEDPLFMLYTSGSTGAPKGVLHTTGGYMVYASMTHQYVFDYHDGDVYWCTADFGWVTGHSYILYGPLANGAITLLFEGVPNYPDSSRMGQVVDKHKVNILYTAPTAIRALMAQGESCMDGTTRGSLKLLGSVGEPINPEAWEWYHRVIGNSKCPIVDTWWQTETGGILISPLPGAVDLKPGSATLPFFGVQPALVDNEGNILEGKTEGNLVILDSWPGQMRTIYGDHERFVQTYFSTYKGMYFTGDGARRDEDGYYWITGRVDDVLNVSGHRLGTAEVESALVAHDKVAEAAVVGYPHDIKGQGIYVYVTLVQGEEPSDELKKELVQWVRKEIGPIASPDVIQWAPGLPKTRSGKIMRRILRKIAANEHDQLGDTSTLADPGVVDELISSRAFK.

CoA-binding positions include 191–194, Thr312, and Asn336; that span reads RGGR. ATP contacts are provided by residues 388–390, 412–417, Asp501, and Arg516; these read GEP and DTWWQT. Ser524 lines the CoA pocket. Arg527 is an ATP binding site. 3 residues coordinate Mg(2+): Val538, His540, and Val543. Arg585 is a binding site for CoA. Lys610 carries the post-translational modification N6-acetyllysine.

This sequence belongs to the ATP-dependent AMP-binding enzyme family. Mg(2+) serves as cofactor. In terms of processing, acetylated. Deacetylation by the SIR2-homolog deacetylase activates the enzyme.

It catalyses the reaction acetate + ATP + CoA = acetyl-CoA + AMP + diphosphate. In terms of biological role, catalyzes the conversion of acetate into acetyl-CoA (AcCoA), an essential intermediate at the junction of anabolic and catabolic pathways. AcsA undergoes a two-step reaction. In the first half reaction, AcsA combines acetate with ATP to form acetyl-adenylate (AcAMP) intermediate. In the second half reaction, it can then transfer the acetyl group from AcAMP to the sulfhydryl group of CoA, forming the product AcCoA. The chain is Acetyl-coenzyme A synthetase from Marinobacter nauticus (strain ATCC 700491 / DSM 11845 / VT8) (Marinobacter aquaeolei).